Reading from the N-terminus, the 162-residue chain is Interleukin-15 (162 aa).

The first 29 residues, 1-29 (MRISKPSLRSTSIQCYLCFLLNSHLITEA), serve as a signal peptide directing secretion. Positions 30–48 (GIHVFVWGCISAGLPKTEA) are excised as a propeptide. 2 disulfide bridges follow: C83-C133 and C90-C136. Residues N119 and N127 are each glycosylated (N-linked (GlcNAc...) asparagine).

The protein belongs to the IL-15/IL-21 family.

The protein resides in the secreted. In terms of biological role, cytokine that plays a major role in the development of inflammatory and protective immune responses to microbial invaders and parasites by modulating immune cells of both the innate and adaptive immune systems. Stimulates the proliferation of natural killer cells, T-cells and B-cells and promotes the secretion of several cytokines. In monocytes, induces the production of IL8 and monocyte chemotactic protein 1/CCL2, two chemokines that attract neutrophils and monocytes respectively to sites of infection. Unlike most cytokines, which are secreted in soluble form, IL15 is expressed in association with its high affinity IL15RA on the surface of IL15-producing cells and delivers signals to target cells that express IL2RB and IL2RG receptor subunits. Binding to its receptor triggers the phosphorylation of JAK1 and JAK3 and the recruitment and subsequent phosphorylation of signal transducer and activator of transcription-3/STAT3 and STAT5. In mast cells, induces the rapid tyrosine phosphorylation of STAT6 and thereby controls mast cell survival and release of cytokines such as IL4. This Cavia porcellus (Guinea pig) protein is Interleukin-15 (IL15).